A 138-amino-acid polypeptide reads, in one-letter code: Basic phospholipase A2 chain HDP-2P (138 aa).

The N-terminal stretch at 1-16 (MRILWIVAVCLIGVEG) is a signal peptide. Intrachain disulfides connect C42-C131, C44-C60, C59-C111, C65-C138, C66-C104, C73-C97, and C91-C102. Ca(2+) contacts are provided by Y43, G45, and G47. H63 is a catalytic residue. D64 contributes to the Ca(2+) binding site. The active site involves D105.

As to quaternary structure, heterodimer of an acidic and a basic chain; non-covalently linked. The toxic basic protein has phospholipase A2 activity (chain HDP-2P) and the non-toxic acidic protein functions as its inhibitor (chain HPD-1I (AC A4VBF0)). Ca(2+) serves as cofactor. In terms of tissue distribution, expressed by the venom gland.

It is found in the secreted. The catalysed reaction is a 1,2-diacyl-sn-glycero-3-phosphocholine + H2O = a 1-acyl-sn-glycero-3-phosphocholine + a fatty acid + H(+). With respect to regulation, enzymatic activity and neurotoxicity are inhibited by Triton X-100. Triton X-100 has been determined to be located in the center of the hydrophobic channel of the enzyme. In terms of biological role, monomer: snake venom phospholipase A2 (PLA2) that affects neuromuscular transmission presynaptically. It has catalytic activity, anticoagulant activity and weakly inhibits ADP-induced platelet aggregation. PLA2 catalyzes the calcium-dependent hydrolysis of the 2-acyl groups in 3-sn-phosphoglycerides. Its function is as follows. Heterodimer: shows the same activities as the monomer, but with a lower potency. This chain is Basic phospholipase A2 chain HDP-2P, found in Vipera nikolskii (Nikolsky's adder).